Consider the following 389-residue polypeptide: Glutamate 5-kinase (389 aa).

Lysine 26 lines the ATP pocket. Substrate is bound by residues serine 66, aspartate 153, and asparagine 167. 187-188 lines the ATP pocket; sequence TD. Positions 293–371 constitute a PUA domain; that stretch reads AGTLFLDQGA…EQIEWILGHR (79 aa).

This sequence belongs to the glutamate 5-kinase family.

Its subcellular location is the cytoplasm. It carries out the reaction L-glutamate + ATP = L-glutamyl 5-phosphate + ADP. The protein operates within amino-acid biosynthesis; L-proline biosynthesis; L-glutamate 5-semialdehyde from L-glutamate: step 1/2. Its function is as follows. Catalyzes the transfer of a phosphate group to glutamate to form L-glutamate 5-phosphate. The polypeptide is Glutamate 5-kinase (Rhodopirellula baltica (strain DSM 10527 / NCIMB 13988 / SH1)).